Here is a 128-residue protein sequence, read N- to C-terminus: Large ribosomal subunit protein uL22 (128 aa).

Belongs to the universal ribosomal protein uL22 family. In terms of assembly, part of the 50S ribosomal subunit.

This protein binds specifically to 23S rRNA; its binding is stimulated by other ribosomal proteins, e.g. L4, L17, and L20. It is important during the early stages of 50S assembly. It makes multiple contacts with different domains of the 23S rRNA in the assembled 50S subunit and ribosome. In terms of biological role, the globular domain of the protein is located near the polypeptide exit tunnel on the outside of the subunit, while an extended beta-hairpin is found that lines the wall of the exit tunnel in the center of the 70S ribosome. The sequence is that of Large ribosomal subunit protein uL22 from Rhodopseudomonas palustris (strain BisB18).